Reading from the N-terminus, the 59-residue chain is UPF0434 protein PBPRA2383 (59 aa).

It belongs to the UPF0434 family.

The polypeptide is UPF0434 protein PBPRA2383 (Photobacterium profundum (strain SS9)).